The chain runs to 652 residues: Vacuolar fusion protein MON1 homolog A (652 aa).

The interval M102–A141 is disordered. Residues S128 and S153 each carry the phosphoserine modification. Residue T158 is modified to Phosphothreonine. The disordered stretch occupies residues T158 to R185. A Phosphoserine modification is found at S188. Residues P211–T245 are disordered.

It belongs to the MON1/SAND family. Interacts with CCZ1. Found in a complex with RMC1, CCZ1, MON1A and MON1B. The MON1A-CCZ1B complex interacts with RIMOC1. The MON1A-CCZ1B complex interacts with RAB7A and this interaction is enhanced in the presence of RIMOC1.

Plays an important role in membrane trafficking through the secretory apparatus. Not involved in endocytic trafficking to lysosomes. Acts in concert with CCZ1, as a guanine exchange factor (GEF) for RAB7, promotes the exchange of GDP to GTP, converting it from an inactive GDP-bound form into an active GTP-bound form. In Homo sapiens (Human), this protein is Vacuolar fusion protein MON1 homolog A (MON1A).